The sequence spans 509 residues: ATP synthase subunit alpha (509 aa).

Residue glycine 169–threonine 176 participates in ATP binding.

The protein belongs to the ATPase alpha/beta chains family. In terms of assembly, F-type ATPases have 2 components, CF(1) - the catalytic core - and CF(0) - the membrane proton channel. CF(1) has five subunits: alpha(3), beta(3), gamma(1), delta(1), epsilon(1). CF(0) has three main subunits: a(1), b(2) and c(9-12). The alpha and beta chains form an alternating ring which encloses part of the gamma chain. CF(1) is attached to CF(0) by a central stalk formed by the gamma and epsilon chains, while a peripheral stalk is formed by the delta and b chains.

The protein resides in the cell membrane. The catalysed reaction is ATP + H2O + 4 H(+)(in) = ADP + phosphate + 5 H(+)(out). Produces ATP from ADP in the presence of a proton gradient across the membrane. The alpha chain is a regulatory subunit. This chain is ATP synthase subunit alpha, found in Limosilactobacillus reuteri (strain DSM 20016) (Lactobacillus reuteri).